The following is a 533-amino-acid chain: Calcium/calmodulin-dependent protein kinase type II subunit delta (533 aa).

A2 bears the N-acetylalanine mark. The region spanning 14–272 is the Protein kinase domain; sequence YQLFEELGKG…ASEALKHPWI (259 aa). ATP-binding positions include 20–28 and K43; that span reads LGKGAFSVV. Catalysis depends on D136, which acts as the Proton acceptor. Positions 283–292 are autoinhibitory domain; the sequence is HRQETVDCLK. Position 287 is a phosphothreonine; by autocatalysis (T287). Positions 291 to 301 are calmodulin-binding; it reads LKKFNARRKLK. 2 positions are modified to phosphothreonine; by autocatalysis: T306 and T307. Residue S315 is modified to Phosphoserine. N6-acetyllysine is present on K318. Phosphoserine is present on residues S319 and S364. Positions 337 to 375 are disordered; the sequence is TSPKENIPTPALEPQTTVIHNPDGNKESTESSNTTIEDE. Phosphothreonine is present on T365. The residue at position 367 (S367) is a Phosphoserine. Residues T370 and T371 each carry the phosphothreonine modification. S438, S524, and S528 each carry phosphoserine.

This sequence belongs to the protein kinase superfamily. CAMK Ser/Thr protein kinase family. CaMK subfamily. In terms of assembly, CAMK2 is composed of 4 different chains: alpha (CAMK2A), beta (CAMK2B), gamma (CAMK2G), and delta (CAMK2D). The different isoforms assemble into homo- or heteromultimeric holoenzymes composed of 12 subunits with two hexameric rings stacked one on top of the other. Interacts with RRAD and CACNB2. Autophosphorylation of Thr-287 following activation by Ca(2+)/calmodulin. Phosphorylation of Thr-287 locks the kinase into an activated state. As to expression, expressed in liver.

It is found in the cell membrane. It localises to the sarcolemma. The protein localises to the sarcoplasmic reticulum membrane. The enzyme catalyses L-seryl-[protein] + ATP = O-phospho-L-seryl-[protein] + ADP + H(+). It catalyses the reaction L-threonyl-[protein] + ATP = O-phospho-L-threonyl-[protein] + ADP + H(+). With respect to regulation, activated by Ca(2+)/calmodulin. Binding of calmodulin results in conformational change that relieves intrasteric autoinhibition and allows autophosphorylation of Thr-287 which turns the kinase in a constitutively active form and confers to the kinase a Ca(2+)-independent activity. Its function is as follows. Calcium/calmodulin-dependent protein kinase involved in the regulation of Ca(2+) homeostatis and excitation-contraction coupling (ECC) in heart by targeting ion channels, transporters and accessory proteins involved in Ca(2+) influx into the myocyte, Ca(2+) release from the sarcoplasmic reticulum (SR), SR Ca(2+) uptake and Na(+) and K(+) channel transport. Targets also transcription factors and signaling molecules to regulate heart function. In its activated form, is involved in the pathogenesis of dilated cardiomyopathy and heart failure. Contributes to cardiac decompensation and heart failure by regulating SR Ca(2+) release via direct phosphorylation of RYR2 Ca(2+) channel on 'Ser-2808'. In the nucleus, phosphorylates the MEF2 repressor HDAC4, promoting its nuclear export and binding to 14-3-3 protein, and expression of MEF2 and genes involved in the hypertrophic program. Is essential for left ventricular remodeling responses to myocardial infarction. In pathological myocardial remodeling acts downstream of the beta adrenergic receptor signaling cascade to regulate key proteins involved in ECC. Regulates Ca(2+) influx to myocytes by binding and phosphorylating the L-type Ca(2+) channel subunit beta-2 CACNB2. In addition to Ca(2+) channels, can target and regulate the cardiac sarcolemmal Na(+) channel Nav1.5/SCN5A and the K+ channel Kv4.3/KCND3, which contribute to arrhythmogenesis in heart failure. Phosphorylates phospholamban (PLN/PLB), an endogenous inhibitor of SERCA2A/ATP2A2, contributing to the enhancement of SR Ca(2+) uptake that may be important in frequency-dependent acceleration of relaxation (FDAR) and maintenance of contractile function during acidosis. May participate in the modulation of skeletal muscle function in response to exercise, by regulating SR Ca(2+) transport through phosphorylation of PLN/PLB and triadin, a ryanodine receptor-coupling factor. In response to interferon-gamma (IFN-gamma) stimulation, catalyzes phosphorylation of STAT1, stimulating the JAK-STAT signaling pathway. The protein is Calcium/calmodulin-dependent protein kinase type II subunit delta (CAMK2D) of Oryctolagus cuniculus (Rabbit).